A 484-amino-acid polypeptide reads, in one-letter code: Synaptic vesicle membrane protein VAT-1 homolog (484 aa).

2 stretches are compositionally biased toward low complexity: residues M1 to A13 and S40 to E61. Disordered stretches follow at residues M1–E65 and I402–N484. Basic and acidic residues predominate over residues P411–N484.

This sequence belongs to the zinc-containing alcohol dehydrogenase family. Quinone oxidoreductase subfamily.

The sequence is that of Synaptic vesicle membrane protein VAT-1 homolog from Danio rerio (Zebrafish).